We begin with the raw amino-acid sequence, 463 residues long: POU domain, class 2, transcription factor 2 (463 aa).

Disordered stretches follow at residues 1–87, 159–182, 259–282, 341–376, and 393–463; these read MVHS…QPHL, QPRAGLPTQPPKCLEPPSHPEEPS, SSLPSPNQLSSPSLGFDGLPGRRR, PCSAAPMLPSPGKPTSYSPHLVTPQGGAGTLPLSQA, and TLHP…PYQP. The span at 12–37 shows a compositional bias: basic and acidic residues; sequence RMSKPLEAEKQSLDSPSEHTDTERNG. Polar residues predominate over residues 41-60; that stretch reads NHQNPQNKASPFSVSPTGPS. The span at 75–85 shows a compositional bias: pro residues; the sequence is AAPPPPQPAQP. Positions 179-253 constitute a POU-specific domain; that stretch reads EEPSDLEELE…LLEKWLNDAE (75 aa). A compositionally biased stretch (low complexity) spans 259–272; that stretch reads SSLPSPNQLSSPSL. A DNA-binding region (homeobox) is located at residues 281–340; it reads RRKKRTSIETNVRFALEKSFLANQKPTSEEILLIAEQLHMEKEVIRVWFCNRRQKEKRIN. The segment at 373–394 is leucine-zipper; that stretch reads LSQASSSLSTTVTTLSSAVGTL. Positions 400 to 409 are enriched in gly residues; sequence AGGGGGGGGA.

Belongs to the POU transcription factor family. Class-2 subfamily. As to quaternary structure, interacts with NR3C1, AR and PGR. Interacts with POU2AF1; the interaction increases POU2F2 transactivation activity. As to expression, highest in B cells, but also present in brain (neuronal and glial cells), intestine, kidney, and testes. In terms of tissue distribution, expressed at higher levels in B-cells than in neuronal cells. Expressed in neuronal cell lines and brain, but not dorsal root ganglia. As to expression, expressed at lower levels in neuronal cells than in B cells. In terms of tissue distribution, expressed in neuronal cell lines, and at lower levels in neuroblastoma and dorsal root ganglia. Widely expressed in the developing nervous system but expression is confined to very specific regions in the adult brain, it is expressed at a lower level in B cells. As to expression, either absent in, or expressed at very low levels in neuronal cells and brain. In terms of tissue distribution, expressed in all tissues tested: mammary gland, liver, spleen, lung, kidney intestine, uterus and ovary of a virgin mouse. Levels of isoform OCT2.7 are highest in spleen and lung. In mammary gland, expression is localized to the alveolus epithelial cells.

It localises to the cytoplasm. It is found in the nucleus. With respect to regulation, transactivation activity is enhanced by transcriptional coactivator POU2AF1. Its function is as follows. Transcription factor that specifically binds to the octamer motif (5'-ATTTGCAT-3'). Regulates IL6 expression in B cells with POU2AF1. Regulates transcription in a number of tissues in addition to activating immunoglobulin gene expression. Modulates transcription transactivation by NR3C1, AR and PGR. Functionally, activates octamer-containing promoters. Represses some promoters and activate others. In terms of biological role, represses some promoters and activate others. Activates the U2 small nuclear RNA (snRNA) promoter. Its function is as follows. Unable to bind to the octamer motif, but can still activate the beta-casein gene promoter at low levels. In Mus musculus (Mouse), this protein is POU domain, class 2, transcription factor 2.